Here is a 138-residue protein sequence, read N- to C-terminus: UPF0310 protein MAV_1800 (138 aa).

This sequence belongs to the UPF0310 family.

In Mycobacterium avium (strain 104), this protein is UPF0310 protein MAV_1800.